A 328-amino-acid polypeptide reads, in one-letter code: 4-hydroxythreonine-4-phosphate dehydrogenase (328 aa).

Substrate is bound by residues histidine 135 and threonine 136. A divalent metal cation is bound by residues histidine 165, histidine 210, and histidine 265. 3 residues coordinate substrate: lysine 273, asparagine 282, and arginine 291.

Belongs to the PdxA family. In terms of assembly, homodimer. Zn(2+) is required as a cofactor. It depends on Mg(2+) as a cofactor. Co(2+) serves as cofactor.

The protein localises to the cytoplasm. The enzyme catalyses 4-(phosphooxy)-L-threonine + NAD(+) = 3-amino-2-oxopropyl phosphate + CO2 + NADH. It participates in cofactor biosynthesis; pyridoxine 5'-phosphate biosynthesis; pyridoxine 5'-phosphate from D-erythrose 4-phosphate: step 4/5. Its function is as follows. Catalyzes the NAD(P)-dependent oxidation of 4-(phosphooxy)-L-threonine (HTP) into 2-amino-3-oxo-4-(phosphooxy)butyric acid which spontaneously decarboxylates to form 3-amino-2-oxopropyl phosphate (AHAP). This chain is 4-hydroxythreonine-4-phosphate dehydrogenase, found in Enterobacter sp. (strain 638).